The primary structure comprises 37 residues: 24 kDa antigen (37 aa).

This Plasmodium chabaudi protein is 24 kDa antigen.